The following is a 154-amino-acid chain: Phospholipase A2 OS1 (154 aa).

The signal sequence occupies residues 1–27 (MHPAHLLVLLAVCVSLLGAARIPPLPL). Intrachain disulfides connect cysteine 38-cysteine 104, cysteine 54-cysteine 153, cysteine 56-cysteine 72, cysteine 71-cysteine 132, cysteine 78-cysteine 125, cysteine 88-cysteine 118, and cysteine 111-cysteine 123. Positions 57 and 59 each coordinate Ca(2+). Residue histidine 75 is part of the active site. A Ca(2+)-binding site is contributed by aspartate 76. The active site involves aspartate 126.

It belongs to the phospholipase A2 family. Group I subfamily. D49 sub-subfamily. As to quaternary structure, monomer. Ca(2+) is required as a cofactor. In terms of tissue distribution, expressed by the venom gland.

The protein localises to the secreted. The catalysed reaction is a 1,2-diacyl-sn-glycero-3-phosphocholine + H2O = a 1-acyl-sn-glycero-3-phosphocholine + a fatty acid + H(+). Functionally, snake venom phospholipase A2 (PLA2) that has a low specific activity on phospholipid substrates, and is neither neurotoxic, nor myotoxic. Induces endothelial cell migration which is mediated, at least in part, by its hydrolytic products. Shows antimalarial activity, but is not able to potently inhibit HIV-1 replication. Binds in a calcium-independent fashion with very high affinity to a muscle-type (M-type) PLA2 receptor, but is a very poor ligand for neuronal-type (N-type) receptors. PLA2 catalyzes the calcium-dependent hydrolysis of the 2-acyl groups in 3-sn-phosphoglycerides. This chain is Phospholipase A2 OS1, found in Oxyuranus scutellatus scutellatus (Australian taipan).